We begin with the raw amino-acid sequence, 439 residues long: Acyl-lipid (8-3)-desaturase (439 aa).

In terms of domain architecture, Cytochrome b5 heme-binding spans 7 to 88; that stretch reads GRSAAREMTA…LPKLDASKVE (82 aa). Residues H40 and H66 each coordinate heme. The chain crosses the membrane as a helical span at residues 123–143; that stretch reads IPHMIYRVVEIVALFALSFWL. The Histidine box-1 signature appears at 171–175; the sequence is HEMGH. The Histidine box-2 motif lies at 208 to 213; that stretch reads HSKHHA. A run of 3 helical transmembrane segments spans residues 254–274, 287–307, and 312–332; these read AYLFAPVSCLLIGLGWTLYLH, FVWIFARYIGWFSLMGALGYS, and VGMYLCSFGLGCIYIFLQFAV. Positions 376–380 match the Histidine box-3 motif; the sequence is QIEHH.

The protein belongs to the fatty acid desaturase type 1 family. Fe(2+) serves as cofactor.

The protein resides in the membrane. The enzyme catalyses an (8Z,11Z,14Z)-icosatrienoyl-containing glycerolipid + 2 Fe(II)-[cytochrome b5] + O2 + 2 H(+) = (5Z,8Z,11Z,14Z)-eicosatetraenoyl-containing glycerolipid + 2 Fe(III)-[cytochrome b5] + 2 H2O. It carries out the reaction an (8Z,11Z,14Z,17Z)-eicosatetraenoyl-containing glycerolipid + 2 Fe(II)-[cytochrome b5] + O2 + 2 H(+) = a (5Z,8Z,11Z,14Z,17Z)-eicosapentaenoyl-containing glycerolipid + 2 Fe(III)-[cytochrome b5] + 2 H2O. Its function is as follows. Fatty acid desaturase that introduces a cis double bond at the 5-position in 20-carbon polyunsaturated fatty acids incorporated in a glycerolipid that contain a Delta(8) double bond. This is Acyl-lipid (8-3)-desaturase from Thraustochytrium sp.